The chain runs to 94 residues: Long neurotoxin-like OH-31 (94 aa).

Positions 1–19 are cleaved as a signal peptide; the sequence is MKTLLLTLVVVTILCLDLG. Cystine bridges form between Cys35/Cys55, Cys37/Cys66, Cys70/Cys81, and Cys82/Cys87.

This sequence belongs to the three-finger toxin family. Long-chain subfamily. Type II alpha-neurotoxin sub-subfamily. In terms of tissue distribution, expressed by the venom gland.

The protein localises to the secreted. Functionally, binds with high affinity to muscular nicotinic acetylcholine receptors (nAChRs), whereas it binds with a low affinity to neuronal alpha-7/CHRNA7 nAChRs. The sequence is that of Long neurotoxin-like OH-31 from Ophiophagus hannah (King cobra).